Reading from the N-terminus, the 2283-residue chain is Serine-rich adhesin for platelets (2283 aa).

The first 89 residues, 1-89, serve as a signal peptide directing secretion; sequence MSKRQKAFHD…VNMLHDQQAF (89 aa). A serine-rich repeat region 1, SRR1 region spans residues 90-230; that stretch reads AASDAPLTSE…KTSTTSTSTA (141 aa). Residues 100–111 show a composition bias toward polar residues; it reads LNTQSETVGNQN. Disordered stretches follow at residues 100-230, 691-721, and 751-2255; these read LNTQ…TSTA, NSGN…GTPT, and NSMS…GLLG. The segment covering 112–128 has biased composition (low complexity); sequence STTIEASTSTADSTSVT. Residues 129-140 show a composition bias toward polar residues; the sequence is KNSSSVQTSNSD. Residues 149–229 are compositionally biased toward low complexity; the sequence is NVTSTTNSTS…NKTSTTSTST (81 aa). The segment at 231–751 is non-repeat region (NRR); sequence PVKLRTFSRL…TTFKYEVTRN (521 aa). Low complexity-rich tracts occupy residues 752 to 1323, 1330 to 1894, and 1901 to 2225; these read SMSD…SDSI, SLSA…QSSS, and DSMS…SATS. A serine-rich repeat region 2, SRR2 region spans residues 752–2244; that stretch reads SMSDSVSTSG…AQSEERLPDT (1493 aa). The short motif at 2241 to 2245 is the LPXTG sorting signal element; sequence LPDTG. Thr-2244 carries the pentaglycyl murein peptidoglycan amidated threonine modification. A propeptide spans 2245-2283 (removed by sortase); it reads GESIKQNGLLGGIMTLLVGLGLMKRKKKKDENDQDDSQA.

Belongs to the serine-rich repeat protein (SRRP) family. Proteolytically cleaved by a metalloprotease. Post-translationally, glycosylated. It is probable that most of the Ser residues in SSR1 and SSR2 are O-GlcNAcylated. Sequential glycosylation by sugar transferases are able to generate complex sugar polymorphisms.

It is found in the secreted. The protein localises to the cell wall. Its function is as follows. Mediates binding to human platelets, possibly through a receptor-ligand interaction. Probably associated with virulence in endovascular infection. In Staphylococcus aureus, this protein is Serine-rich adhesin for platelets (sraP).